The following is a 197-amino-acid chain: Ras-related protein Rab-7B (197 aa).

GTP is bound by residues 14–21, 33–38, 57–61, 119–122, and 152–153; these read GEKSVGKT, VTLKPT, DTSGQ, NKID, and AK. Residues 31–39 carry the Effector region motif; the sequence is RFVTLKPTI. S-geranylgeranyl cysteine attachment occurs at residues Cys-196 and Cys-197.

It belongs to the small GTPase superfamily. Rab family.

Its function is as follows. Protein transport. Probably involved in vesicular traffic. The polypeptide is Ras-related protein Rab-7B (rab7B) (Dictyostelium discoideum (Social amoeba)).